The primary structure comprises 78 residues: FXYD domain-containing ion transport regulator 7 (78 aa).

At 1 to 22 (MATQVPTKVPQDPDPFYYDYDT) the chain is on the extracellular side. O-linked (GlcNAc) threonine glycans are attached at residues Thr3 and Thr7. The chain crosses the membrane as a helical span at residues 23 to 43 (VQTVGMTLATILFLLGILIIL). Residues 44 to 78 (SKKVKCRKADSRSESPTCKSCKSELPSSAPGGGGV) lie on the Cytoplasmic side of the membrane. Residues 52-78 (ADSRSESPTCKSCKSELPSSAPGGGGV) form a disordered region. Phosphoserine is present on Ser71.

Belongs to the FXYD family. As to quaternary structure, regulatory subunit of the sodium/potassium-transporting ATPase which is composed of a catalytic alpha subunit, a non-catalytic beta subunit and an additional regulatory subunit. The regulatory subunit, a member of the FXYD protein family, modulates the enzymatic activity in a tissue- and isoform-specific way by changing affinities of the Na+/K+-ATPase toward Na(+), K(+) or ATP. O-glycosylated; required for stabilization and translocation to the plasma membrane.

The protein localises to the cell membrane. In terms of biological role, associates with and regulates the activity of the sodium/potassium-transporting ATPase (NKA) which catalyzes the hydrolysis of ATP coupled with the exchange of Na(+) and K(+) ions across the plasma membrane. Reduces the apparent affinity for external K(+), an effect that depends on the presence of external Na(+) and voltage. Increases the apparent affinity for intracellular Na(+). The polypeptide is FXYD domain-containing ion transport regulator 7 (FXYD7) (Bos taurus (Bovine)).